The following is a 123-amino-acid chain: Small ribosomal subunit protein uS12 (123 aa).

3-methylthioaspartic acid is present on Asp-89.

Belongs to the universal ribosomal protein uS12 family. In terms of assembly, part of the 30S ribosomal subunit. Contacts proteins S8 and S17. May interact with IF1 in the 30S initiation complex.

In terms of biological role, with S4 and S5 plays an important role in translational accuracy. Functionally, interacts with and stabilizes bases of the 16S rRNA that are involved in tRNA selection in the A site and with the mRNA backbone. Located at the interface of the 30S and 50S subunits, it traverses the body of the 30S subunit contacting proteins on the other side and probably holding the rRNA structure together. The combined cluster of proteins S8, S12 and S17 appears to hold together the shoulder and platform of the 30S subunit. The chain is Small ribosomal subunit protein uS12 from Rhodopseudomonas palustris (strain BisB18).